The sequence spans 55 residues: Photosystem II reaction center protein K (55 aa).

Positions Met-1 to Ala-18 are excised as a propeptide. Residues Ile-26–Phe-46 traverse the membrane as a helical segment.

It belongs to the PsbK family. As to quaternary structure, PSII is composed of 1 copy each of membrane proteins PsbA, PsbB, PsbC, PsbD, PsbE, PsbF, PsbH, PsbI, PsbJ, PsbK, PsbL, PsbM, PsbT, PsbX, PsbY, PsbZ, Psb30/Ycf12, at least 3 peripheral proteins of the oxygen-evolving complex and a large number of cofactors. It forms dimeric complexes.

Its subcellular location is the plastid. The protein localises to the chloroplast thylakoid membrane. One of the components of the core complex of photosystem II (PSII). PSII is a light-driven water:plastoquinone oxidoreductase that uses light energy to abstract electrons from H(2)O, generating O(2) and a proton gradient subsequently used for ATP formation. It consists of a core antenna complex that captures photons, and an electron transfer chain that converts photonic excitation into a charge separation. This Marchantia polymorpha (Common liverwort) protein is Photosystem II reaction center protein K.